The following is a 543-amino-acid chain: Membrane protein insertase YidC (543 aa).

Residues 7 to 27 (FLLIGLAMVSFLLWQQWQVDY) form a helical membrane-spanning segment. Positions 30–61 (QPAQPVESQQTTGSDAPNSNGDVPIATPTNKS) are disordered. Polar residues predominate over residues 35-61 (VESQQTTGSDAPNSNGDVPIATPTNKS). 4 helical membrane passes run 341–361 (FAFL…IILI), 421–441 (GGCF…WVLL), 451–471 (FIFW…PILT), and 499–519 (PVAM…YWLI).

It belongs to the OXA1/ALB3/YidC family. Type 1 subfamily. Interacts with the Sec translocase complex via SecD. Specifically interacts with transmembrane segments of nascent integral membrane proteins during membrane integration.

It is found in the cell inner membrane. Required for the insertion and/or proper folding and/or complex formation of integral membrane proteins into the membrane. Involved in integration of membrane proteins that insert both dependently and independently of the Sec translocase complex, as well as at least some lipoproteins. Aids folding of multispanning membrane proteins. The polypeptide is Membrane protein insertase YidC (Pseudoalteromonas atlantica (strain T6c / ATCC BAA-1087)).